A 560-amino-acid chain; its full sequence is Trans-activating transcriptional regulatory protein (560 aa).

Residues 106-133 are disordered; the sequence is DSMKRKASELDSDSDSGESSKGKKRVIK.

Belongs to the nucleopolyhedrovirus IE-1 protein family.

Functionally, regulatory transcriptional protein, which trans-activates gene expression from early baculovirus promoters. Can also trans-activate its own promoter, suggesting that it is autoregulated during normal infection of insect cells. This is Trans-activating transcriptional regulatory protein (IE1) from Choristoneura fumiferana nuclear polyhedrosis virus (CfMNPV).